A 561-amino-acid chain; its full sequence is DNA ligase B (561 aa).

The N6-AMP-lysine intermediate role is filled by Lys128.

It belongs to the NAD-dependent DNA ligase family. LigB subfamily.

It carries out the reaction NAD(+) + (deoxyribonucleotide)n-3'-hydroxyl + 5'-phospho-(deoxyribonucleotide)m = (deoxyribonucleotide)n+m + AMP + beta-nicotinamide D-nucleotide.. In terms of biological role, catalyzes the formation of phosphodiester linkages between 5'-phosphoryl and 3'-hydroxyl groups in double-stranded DNA using NAD as a coenzyme and as the energy source for the reaction. In Pseudomonas syringae pv. tomato (strain ATCC BAA-871 / DC3000), this protein is DNA ligase B.